We begin with the raw amino-acid sequence, 798 residues long: Copalyl diphosphate synthase 1, chloroplastic (798 aa).

A chloroplast-targeting transit peptide spans 1–72 (MASLSTMHLI…SKVAGINRVA (72 aa)). Residue Lys-251 participates in substrate binding. Mg(2+) contacts are provided by Asp-383 and Asp-385. A DXDD motif motif is present at residues 383–386 (DIDD). Substrate is bound at residue Lys-469.

This sequence belongs to the terpene synthase family. Tpsc subfamily. Mg(2+) is required as a cofactor. As to expression, highly expressed in roots, and, at low levels, in stems and leaves.

The protein resides in the plastid. The protein localises to the chloroplast. It carries out the reaction (2E,6E,10E)-geranylgeranyl diphosphate = (+)-copalyl diphosphate. The protein operates within secondary metabolite biosynthesis; terpenoid biosynthesis. Functionally, involved in the biosynthesis of ent-kaurene diterpenoids natural products such as oridonin, miltiradiene, eriocalyxin B and nezukol, known to exhibit antitumor, anti-inflammatory and antibacterial activities. Catalyzes the conversion of (2E,6E,10E)-geranylgeranyl diphosphate (GGPP) to (+)-copalyl diphosphate ((+)-CPP). This is Copalyl diphosphate synthase 1, chloroplastic from Isodon rubescens (Rabdosia rubescens).